The primary structure comprises 447 residues: RNA-binding protein 208 (447 aa).

RRM domains follow at residues 73-147 and 158-236; these read RSVY…WAYA and FHIF…WATK. Over residues 254–269 the composition is skewed to polar residues; sequence TNGSSSNPGMEASQDT. Disordered regions lie at residues 254–279 and 353–372; these read TNGSSSNPGMEASQDTGSKENPENNP and WGNKPTPPGTSSKPLPPPLP. Residues 282–356 enclose the RRM 3 domain; sequence TTVYVGNLGH…KPIKCSWGNK (75 aa).

Interacts with RBP-P.

Functionally, RNA-binding protein. This Oryza sativa subsp. japonica (Rice) protein is RNA-binding protein 208.